The chain runs to 187 residues: Mitochondrial import receptor subunit TOM20-4 (187 aa).

M1 bears the N-acetylmethionine mark. Residues 1–160 (MDMQNENERL…QKKTSEFKYD (160 aa)) are Cytoplasmic-facing. The stretch at 84–117 (LSFGFLSSDQTEASDNFEKASQFFQLAVEEQPES) is one TPR repeat. The helical transmembrane segment at 161–178 (VFGWVILASYVVAWISFA) threads the bilayer. The Mitochondrial intermembrane portion of the chain corresponds to 179–187 (NSQTPVSRQ). An AKR2A-binding sequence (ABS) required for mitochondrion outer membrane targeting motif is present at residues 179 to 187 (NSQTPVSRQ).

The protein belongs to the Tom20 family. As to quaternary structure, forms part of the preprotein translocase complex of the outer mitochondrial membrane (TOM complex) which consists of at least 6 different proteins (TOM5, TOM6, TOM7, TOM20, TOM22/TOM9 and TOM40). Interacts with a variety of mitochondrial precursor proteins. Interacts with AKR2A. Component of a mitochondrial large protein complex that contains, at least, MIC60, DGS1, TOM40, TOM20 proteins, and petC/RISP. In terms of processing, the N-terminus is blocked. As to expression, expressed in roots, flowers, young cotyledons and leaves.

Its subcellular location is the mitochondrion outer membrane. Functionally, central component of the receptor complex responsible for the recognition and translocation of cytosolically synthesized mitochondrial preproteins. Together with TOM22 functions as the transit peptide receptor at the surface of the mitochondrion outer membrane and facilitates the movement of preproteins into the translocation pore. The sequence is that of Mitochondrial import receptor subunit TOM20-4 from Arabidopsis thaliana (Mouse-ear cress).